We begin with the raw amino-acid sequence, 266 residues long: Glucosamine-6-phosphate deaminase (266 aa).

Residue Asp72 is the Proton acceptor; for enolization step of the active site. The active-site For ring-opening step is the Asp141. His143 acts as the Proton acceptor; for ring-opening step in catalysis. Glu148 functions as the For ring-opening step in the catalytic mechanism.

It belongs to the glucosamine/galactosamine-6-phosphate isomerase family. NagB subfamily. As to quaternary structure, homohexamer; trimer of disulfide-linked dimers.

The catalysed reaction is alpha-D-glucosamine 6-phosphate + H2O = beta-D-fructose 6-phosphate + NH4(+). The protein operates within amino-sugar metabolism; N-acetylneuraminate degradation; D-fructose 6-phosphate from N-acetylneuraminate: step 5/5. Its activity is regulated as follows. Allosterically activated by N-acetylglucosamine 6-phosphate (GlcNAc6P). Functionally, catalyzes the reversible isomerization-deamination of glucosamine 6-phosphate (GlcN6P) to form fructose 6-phosphate (Fru6P) and ammonium ion. This chain is Glucosamine-6-phosphate deaminase, found in Vibrio parahaemolyticus serotype O3:K6 (strain RIMD 2210633).